Reading from the N-terminus, the 319-residue chain is Plastid lipid-associated protein 2, chloroplastic (319 aa).

A chloroplast-targeting transit peptide spans M1–R59. Positions Q17–T39 are disordered. Over residues S18–S36 the composition is skewed to low complexity.

It belongs to the PAP/fibrillin family. As to expression, expressed almost exclusively in petals. Very weak expression in all other organs.

It is found in the plastid. The protein localises to the chloroplast. In terms of biological role, may stabilize the accumulated carotenoid structures. The chain is Plastid lipid-associated protein 2, chloroplastic (PAP2) from Brassica campestris (Field mustard).